Consider the following 308-residue polypeptide: 4-hydroxy-tetrahydrodipicolinate synthase (308 aa).

Thr-53 serves as a coordination point for pyruvate. Tyr-141 (proton donor/acceptor) is an active-site residue. The Schiff-base intermediate with substrate role is filled by Lys-169. Pyruvate is bound at residue Val-209.

This sequence belongs to the DapA family. As to quaternary structure, homotetramer; dimer of dimers.

The protein resides in the cytoplasm. The enzyme catalyses L-aspartate 4-semialdehyde + pyruvate = (2S,4S)-4-hydroxy-2,3,4,5-tetrahydrodipicolinate + H2O + H(+). The protein operates within amino-acid biosynthesis; L-lysine biosynthesis via DAP pathway; (S)-tetrahydrodipicolinate from L-aspartate: step 3/4. Its function is as follows. Catalyzes the condensation of (S)-aspartate-beta-semialdehyde [(S)-ASA] and pyruvate to 4-hydroxy-tetrahydrodipicolinate (HTPA). The sequence is that of 4-hydroxy-tetrahydrodipicolinate synthase from Acidothermus cellulolyticus (strain ATCC 43068 / DSM 8971 / 11B).